The following is a 451-amino-acid chain: Putative gluconeogenesis factor (451 aa).

It belongs to the gluconeogenesis factor family.

The protein resides in the cytoplasm. In terms of biological role, required for morphogenesis under gluconeogenic growth conditions. This chain is Putative gluconeogenesis factor, found in Clostridium acetobutylicum (strain ATCC 824 / DSM 792 / JCM 1419 / IAM 19013 / LMG 5710 / NBRC 13948 / NRRL B-527 / VKM B-1787 / 2291 / W).